The chain runs to 728 residues: Homoaconitase, mitochondrial (728 aa).

The transit peptide at 1–24 (MVAIPRLARLSVPAWALSARGRFY) directs the protein to the mitochondrion. 3 residues coordinate [4Fe-4S] cluster: cysteine 362, cysteine 422, and cysteine 425.

It belongs to the aconitase/IPM isomerase family. Requires [4Fe-4S] cluster as cofactor.

It localises to the mitochondrion. It catalyses the reaction (2R,3S)-homoisocitrate = cis-homoaconitate + H2O. The protein operates within amino-acid biosynthesis; L-lysine biosynthesis via AAA pathway; L-alpha-aminoadipate from 2-oxoglutarate: step 3/5. In terms of biological role, catalyzes the reversible hydration of cis-homoaconitate to (2R,3S)-homoisocitrate, a step in the alpha-aminoadipate pathway for lysine biosynthesis. The sequence is that of Homoaconitase, mitochondrial (LYS4) from Cryptococcus neoformans var. neoformans serotype D (strain JEC21 / ATCC MYA-565) (Filobasidiella neoformans).